The primary structure comprises 318 residues: Dimethyladenosine transferase (318 aa).

The S-adenosyl-L-methionine site is built by His-37, Leu-39, Gly-64, Glu-85, Asp-113, and Asn-128.

The protein belongs to the class I-like SAM-binding methyltransferase superfamily. rRNA adenine N(6)-methyltransferase family.

The protein resides in the cytoplasm. It localises to the nucleus. It is found in the nucleolus. The catalysed reaction is adenosine(1779)/adenosine(1780) in 18S rRNA + 4 S-adenosyl-L-methionine = N(6)-dimethyladenosine(1779)/N(6)-dimethyladenosine(1780) in 18S rRNA + 4 S-adenosyl-L-homocysteine + 4 H(+). In terms of biological role, specifically dimethylates two adjacent adenosines in the loop of a conserved hairpin near the 3'-end of 18S rRNA in the 40S particle. In Saccharomyces cerevisiae (strain ATCC 204508 / S288c) (Baker's yeast), this protein is Dimethyladenosine transferase.